The following is a 190-amino-acid chain: Adenylate kinase (190 aa).

11–16 is a binding site for ATP; it reads GAGKGT. The segment at 31–60 is NMP; the sequence is STGDIFRFNIKNETELGKLAKTFMDKGDLV. Residues Thr-32, Arg-37, 58 to 60, 86 to 89, and Gln-93 each bind AMP; these read DLV and GFPR. Residues 127 to 137 form an LID region; sequence ERGKTSGRVDD. Position 128 (Arg-128) interacts with ATP. 2 residues coordinate AMP: Arg-134 and Arg-146. Gly-174 contacts ATP.

Belongs to the adenylate kinase family. In terms of assembly, monomer.

It localises to the cytoplasm. The enzyme catalyses AMP + ATP = 2 ADP. The protein operates within purine metabolism; AMP biosynthesis via salvage pathway; AMP from ADP: step 1/1. Functionally, catalyzes the reversible transfer of the terminal phosphate group between ATP and AMP. Plays an important role in cellular energy homeostasis and in adenine nucleotide metabolism. The chain is Adenylate kinase from Flavobacterium psychrophilum (strain ATCC 49511 / DSM 21280 / CIP 103535 / JIP02/86).